The sequence spans 199 residues: MELKQFDGQKKSELSLIEVAHAILSQHGDVMAFADLTNAVQSYLGKSDEEIRERLSQFYTDLNIDGSFISLGDNMWGLRAWYPFESIDEAVIHTDDDEDEDRPKRKKVNAFLADAGDDDDVIDYDDDDPEDDDNYDDDDDQDDDTDDSASSKYDELAGVDDTDDDVADETLPDGIEGQLSELNDDDDDDDYDDEDDESK.

The 68-residue stretch at 14–81 folds into the HTH HARE-type domain; sequence LSLIEVAHAI…GDNMWGLRAW (68 aa). 3 stretches are compositionally biased toward acidic residues: residues 116 to 147, 157 to 171, and 182 to 199; these read GDDD…DTDD, AGVD…DETL, and LNDD…DESK. Positions 116–199 are disordered; it reads GDDDDVIDYD…DYDDEDDESK (84 aa).

It belongs to the RpoE family. RNAP is composed of a core of 2 alpha, a beta and a beta' subunits. The core is associated with a delta subunit and one of several sigma factors.

Functionally, participates in both the initiation and recycling phases of transcription. In the presence of the delta subunit, RNAP displays an increased specificity of transcription, a decreased affinity for nucleic acids, and an increased efficiency of RNA synthesis because of enhanced recycling. The sequence is that of Probable DNA-directed RNA polymerase subunit delta from Lactiplantibacillus plantarum (strain ATCC BAA-793 / NCIMB 8826 / WCFS1) (Lactobacillus plantarum).